Reading from the N-terminus, the 273-residue chain is Transmembrane epididymal protein 1 (273 aa).

The next 6 helical transmembrane spans lie at 34–54, 72–92, 96–116, 129–149, 158–178, and 195–215; these read IVTG…GMVL, LTMF…KNVL, CVGL…LLMV, VYSL…AELW, LMET…GFIL, and IMFV…FLLG.

It belongs to the TMEM45 family.

The protein localises to the membrane. In Homo sapiens (Human), this protein is Transmembrane epididymal protein 1 (TEDDM1).